The sequence spans 591 residues: Cineole synthase 1, chloroplastic (591 aa).

A chloroplast-targeting transit peptide spans 1 to 44 (MSSLIMQVVIPKPAKFFHNNLFSLSSKRHRFSTTTTTRGGRWAR). (2E)-geranyl diphosphate contacts are provided by Arg308, Asp345, Asp349, Arg486, and Asp489. Asp345 and Asp349 together coordinate Mg(2+). A DDXXD motif motif is present at residues 345 to 349 (DDVFD). Residues Asp489, Thr493, and Glu497 each contribute to the Mg(2+) site.

This sequence belongs to the terpene synthase family. Tpsb subfamily. Monomer. Mg(2+) serves as cofactor. Mn(2+) is required as a cofactor.

The protein resides in the plastid. Its subcellular location is the chloroplast. The catalysed reaction is (2E)-geranyl diphosphate + H2O = 1,8-cineole + diphosphate. The enzyme catalyses (2E)-geranyl diphosphate = alpha-pinene + diphosphate. It catalyses the reaction (2E)-geranyl diphosphate = beta-pinene + diphosphate. It carries out the reaction (2E)-geranyl diphosphate + H2O = (S)-alpha-terpineol + diphosphate. The catalysed reaction is (2E)-geranyl diphosphate = beta-myrcene + diphosphate. The enzyme catalyses (2E)-geranyl diphosphate = sabinene + diphosphate. It functions in the pathway secondary metabolite biosynthesis; terpenoid biosynthesis. Monoterpene synthase (TPS) involved in the biosynthesis of monoterpene natural products, components of the chemical defense arsenal. Catalyzes the conversion of (2E)-geranyl diphosphate (GPP) into 1,8-cineole, and, as minor products, alpha-terpineol, beta-pinene, alpha-pinene, sabinene and myrcene. The polypeptide is Cineole synthase 1, chloroplastic (Salvia fruticosa (Greek sage)).